A 458-amino-acid chain; its full sequence is Glutamyl-tRNA reductase (458 aa).

Substrate is bound by residues 49-52, Ser-109, 114-116, and Gln-120; these read TCNR and EQQ. Catalysis depends on Cys-50, which acts as the Nucleophile. 191-196 contributes to the NADP(+) binding site; sequence GAGAMA.

Belongs to the glutamyl-tRNA reductase family. In terms of assembly, homodimer.

It catalyses the reaction (S)-4-amino-5-oxopentanoate + tRNA(Glu) + NADP(+) = L-glutamyl-tRNA(Glu) + NADPH + H(+). The protein operates within porphyrin-containing compound metabolism; protoporphyrin-IX biosynthesis; 5-aminolevulinate from L-glutamyl-tRNA(Glu): step 1/2. Functionally, catalyzes the NADPH-dependent reduction of glutamyl-tRNA(Glu) to glutamate 1-semialdehyde (GSA). The polypeptide is Glutamyl-tRNA reductase (Corynebacterium aurimucosum (strain ATCC 700975 / DSM 44827 / CIP 107346 / CN-1) (Corynebacterium nigricans)).